The primary structure comprises 249 residues: Probable proteasome subunit alpha type-2 (249 aa).

It belongs to the peptidase T1A family. In terms of assembly, the 26S proteasome consists of a 20S proteasome core and two 19S regulatory subunits. The 20S proteasome core is composed of 28 subunits that are arranged in four stacked rings, resulting in a barrel-shaped structure. The two end rings are each formed by seven alpha subunits, and the two central rings are each formed by seven beta subunits. The catalytic chamber with the active sites is on the inside of the barrel.

Its subcellular location is the cytoplasm. The protein resides in the nucleus. Its function is as follows. The proteasome is a multicatalytic proteinase complex which is characterized by its ability to cleave peptides with Arg, Phe, Tyr, Leu, and Glu adjacent to the leaving group at neutral or slightly basic pH. The proteasome has an ATP-dependent proteolytic activity. The protein is Probable proteasome subunit alpha type-2 (pca-2) of Neurospora crassa (strain ATCC 24698 / 74-OR23-1A / CBS 708.71 / DSM 1257 / FGSC 987).